A 408-amino-acid polypeptide reads, in one-letter code: MDRISGLPDELLLRVLSLLPNVKDVVVTMVLSKRWQFLWMMVPKLVYDDSYQNLEYGKFSRFVDRSLFMRKAPGIETLHFKLGQNCGNGDIQWWIRAASKFCFRELIIEINCSTSASPSILPRSLYTECRMLVTLKLKKAVLVDVSSPTCFPSLKNLSLVSVKYPGNEFVKSLLSSCHVLEDLVVEQCINDNVTIFSVKVPSLKSLVLRTSKERAPDGESGFVVEAPSLEYLDIDQTGGFCVIENGMPNLAEAYVSVLHHHPVKFLSSITSVKRLYLCLLPHSILSCMQDMYPIRCVFHRLVHITLCTCDDEWLNLLACLLKGSPKLISLKLEKHHGHLICSPSPLRDDLSSVPECVLSSLETVEWVDYEGTEAERQLVEFILRNGSCLKKFVISPESVNPDKKYEMI.

An F-box domain is found at 1-54 (MDRISGLPDELLLRVLSLLPNVKDVVVTMVLSKRWQFLWMMVPKLVYDDSYQNL). The FBD domain occupies 345–408 (PLRDDLSSVP…VNPDKKYEMI (64 aa)).

The polypeptide is Putative FBD-associated F-box protein At5g50270 (Arabidopsis thaliana (Mouse-ear cress)).